A 415-amino-acid polypeptide reads, in one-letter code: Acrosin (415 aa).

An N-terminal signal peptide occupies residues 1–16; the sequence is MLPTAVLLVLAVSVAA. N-linked (GlcNAc...) asparagine glycosylation occurs at Asn-19. 6 disulfide bridges follow: Cys-22–Cys-152, Cys-26–Cys-160, Cys-71–Cys-87, Cys-175–Cys-244, Cys-207–Cys-223, and Cys-234–Cys-264. Residues 40–288 enclose the Peptidase S1 domain; sequence VVGGMSAEPG…YLNWIASKIG (249 aa). Active-site charge relay system residues include His-86 and Asp-140. Residue Asn-208 is glycosylated (N-linked (GlcNAc...) asparagine). The Charge relay system role is filled by Ser-238. Disordered regions lie at residues 296–376 and 395–415; these read QLGT…PPQA and FSSG…LPAS. Pro residues-rich tracts occupy residues 300 to 312 and 328 to 367; these read PPRP…PVRP and PPGP…PPPQ. Positions 339–415 are cleaved as a propeptide — pro-rich; sequence PRPPAPPPAP…TTDLQELPAS (77 aa). Residues 395-409 show a composition bias toward polar residues; the sequence is FSSGRSYYETETTDL.

It belongs to the peptidase S1 family. As to quaternary structure, heavy chain (catalytic) and a light chain linked by two disulfide bonds. Forms a heterodimer with SERPINA5.

The catalysed reaction is Preferential cleavage: Arg-|-Xaa, Lys-|-Xaa.. With respect to regulation, inhibited by SERPINA5. Its function is as follows. Acrosin is the major protease of mammalian spermatozoa. It is a serine protease of trypsin-like cleavage specificity, it is synthesized in a zymogen form, proacrosin and stored in the acrosome. This Sus scrofa (Pig) protein is Acrosin (ACR).